Reading from the N-terminus, the 212-residue chain is Pyridoxine/pyridoxamine 5'-phosphate oxidase (212 aa).

Substrate contacts are provided by residues 8 to 11 (RREY) and Lys-66. FMN contacts are provided by residues 61 to 66 (RIVLLK), 76 to 77 (FT), Arg-82, Lys-83, and Gln-105. 3 residues coordinate substrate: Tyr-123, Arg-127, and Ser-131. Residues 140 to 141 (QS) and Trp-185 contribute to the FMN site. 191–193 (RLH) provides a ligand contact to substrate. Residue Arg-195 participates in FMN binding.

This sequence belongs to the pyridoxamine 5'-phosphate oxidase family. Homodimer. It depends on FMN as a cofactor.

It carries out the reaction pyridoxamine 5'-phosphate + O2 + H2O = pyridoxal 5'-phosphate + H2O2 + NH4(+). It catalyses the reaction pyridoxine 5'-phosphate + O2 = pyridoxal 5'-phosphate + H2O2. The protein operates within cofactor metabolism; pyridoxal 5'-phosphate salvage; pyridoxal 5'-phosphate from pyridoxamine 5'-phosphate: step 1/1. It functions in the pathway cofactor metabolism; pyridoxal 5'-phosphate salvage; pyridoxal 5'-phosphate from pyridoxine 5'-phosphate: step 1/1. In terms of biological role, catalyzes the oxidation of either pyridoxine 5'-phosphate (PNP) or pyridoxamine 5'-phosphate (PMP) into pyridoxal 5'-phosphate (PLP). The polypeptide is Pyridoxine/pyridoxamine 5'-phosphate oxidase (Shewanella sp. (strain MR-7)).